A 757-amino-acid polypeptide reads, in one-letter code: Protein aardvark (757 aa).

Disordered stretches follow at residues Ser-39–Asn-63, Leu-122–Leu-166, and Ser-256–Ser-285. Positions Ile-121–Ile-205 form a coiled coil. Composition is skewed to low complexity over residues Asn-125–Ser-164 and Ser-256–Asn-270. Residues Gln-310–Leu-356 enclose the F-box domain. ARM repeat units lie at residues Gly-454 to Asn-498, Gly-506 to Glu-548, Gly-549 to Glu-591, Gly-592 to Gln-634, Asn-635 to Glu-678, and Gly-679 to Gly-723.

Belongs to the beta-catenin family.

Its subcellular location is the cytoplasm. It is found in the cell junction. Its function is as follows. Required to regulate pattern formation during multi-cellular stages of development and for the formation of adherens junctions. Plays a structural role during the regulation of stalk formation. Involved in cell signaling. Required for spore-cell differentiation. Overexpression increases number and size of cell junctions and reduces spore-cell formation. The protein is Protein aardvark (aarA) of Dictyostelium discoideum (Social amoeba).